Consider the following 98-residue polypeptide: UPF0235 protein azo3464 (98 aa).

This sequence belongs to the UPF0235 family.

This is UPF0235 protein azo3464 from Azoarcus sp. (strain BH72).